A 256-amino-acid chain; its full sequence is Low molecular mass lipoprotein PBMHP-6 (256 aa).

A signal peptide spans Met-1–Ala-19.

It belongs to the 30 kDa lipoprotein family.

The protein localises to the secreted. The protein is Low molecular mass lipoprotein PBMHP-6 of Bombyx mori (Silk moth).